The chain runs to 77 residues: Apelin (77 aa).

An N-terminal signal peptide occupies residues 1–22; it reads MNVKILTLVIVLVVSLLCSASA. Positions 21-77 are disordered; the sequence is SAGPMASTEHSKEIEEVGSMRTPLRQNPARAGRSQRPAGWRRRRPRPRLSHKGPMPF. Positions 59–71 are enriched in basic residues; that stretch reads GWRRRRPRPRLSH.

This sequence belongs to the apelin family.

The protein resides in the secreted. It is found in the extracellular space. Functionally, peptide hormone that functions as endogenous ligand for the G-protein-coupled apelin receptor (aplnra and/or aplnrb), that plays a role in cadiovascular homeostasis. Functions as a balanced agonist activating both G(i) protein pathway and beta-arrestin pathway of APLNR. Downstream G proteins activation, apelin can inhibit cAMP production and activate key intracellular effectors such as ERKs. On the other hand, APLNR activation induces beta-arrestin recruitment to the membrane leading to desensitization and internalization of the receptor. Apelin blunts cardiac hypertrophic induction from APLNR on response to pathological stimuli, but also induces myocardial hypertrophy under normal conditions. Involved in the regulation of cardiac precursor cell movements during gastrulation and heart morphogenesis. Plays a role in early coronary blood vessels formation. Mediates myocardial contractility in an ERK1/2-dependent manner. May also have a role in the central control of body fluid homeostasis. This Danio rerio (Zebrafish) protein is Apelin.